Here is a 359-residue protein sequence, read N- to C-terminus: Oplophorus-luciferin 2-monooxygenase non-catalytic subunit (359 aa).

The signal sequence occupies residues 1-39 (MAVNFKFSLLTITIVVNILVYCNASAIKFDVDLEKVPSN). LRR repeat units follow at residues 135–158 (AATL…EMSQ), 160–180 (TKLN…ALSS), 181–203 (DTLA…AFQT), 228–251 (SPKL…AIKL), 255–278 (GPTT…AVEG), 280–300 (QGIL…VWRP), 302–325 (LENL…MWLI), and 331–356 (LAKI…VFHA).

As to quaternary structure, heterotetramer of a catalytic 19 kDa and a non-catalytic 35 kDa subunit.

The protein resides in the secreted. Non-catalytic subunit of oplophorus-luciferin 2-monooxygenase. May stabilize the active conformation of the catalytic subunit. This is Oplophorus-luciferin 2-monooxygenase non-catalytic subunit from Oplophorus gracilirostris (Luminous shrimp).